Reading from the N-terminus, the 328-residue chain is DNA-directed RNA polymerase subunit alpha (328 aa).

An alpha N-terminal domain (alpha-NTD) region spans residues 1–234; the sequence is MQNSTTEFLK…DQMSIFADLQ (234 aa). The alpha C-terminal domain (alpha-CTD) stretch occupies residues 248–328; the sequence is IDPVLLRPVD…AWPPVGLEKP (81 aa).

It belongs to the RNA polymerase alpha chain family. Homodimer. The RNAP catalytic core consists of 2 alpha, 1 beta, 1 beta' and 1 omega subunit. When a sigma factor is associated with the core the holoenzyme is formed, which can initiate transcription.

The catalysed reaction is RNA(n) + a ribonucleoside 5'-triphosphate = RNA(n+1) + diphosphate. Its function is as follows. DNA-dependent RNA polymerase catalyzes the transcription of DNA into RNA using the four ribonucleoside triphosphates as substrates. The chain is DNA-directed RNA polymerase subunit alpha from Neisseria meningitidis serogroup A / serotype 4A (strain DSM 15465 / Z2491).